The following is a 1600-amino-acid chain: A disintegrin and metalloproteinase with thrombospondin motifs 12 (1600 aa).

The N-terminal stretch at 1 to 25 is a signal peptide; the sequence is MPCARGSWLAKLSIVAQLINFGAFC. Positions 26 to 244 are excised as a propeptide; that stretch reads HGRQTQPWPV…TLRSRSLSRR (219 aa). Asn-105 carries N-linked (GlcNAc...) asparagine glycosylation. The short motif at 210–217 is the Cysteine switch element; the sequence is PICGLKDS. Cys-212 contributes to the Zn(2+) binding site. One can recognise a Peptidase M12B domain in the interval 250 to 460; it reads RWVETLVVAD…GRGFCLDDIP (211 aa). 11 disulfides stabilise this stretch: Cys-326–Cys-380, Cys-355–Cys-362, Cys-374–Cys-455, Cys-413–Cys-439, Cys-482–Cys-505, Cys-493–Cys-511, Cys-500–Cys-530, Cys-524–Cys-535, Cys-558–Cys-595, Cys-562–Cys-600, and Cys-573–Cys-585. His-396 contributes to the Zn(2+) binding site. Glu-397 is a catalytic residue. The Zn(2+) site is built by His-400 and His-406. In terms of domain architecture, Disintegrin spans 469 to 548; it reads VIAPGVIYDV…GKKPESIPGG (80 aa). TSP type-1 domains are found at residues 546 to 601, 827 to 887, 891 to 947, and 948 to 1001; these read PGGW…HPCR, KLLY…KDCP, WAGE…RDIL, and CPSD…QQCP. The tract at residues 705–831 is spacer 1; the sequence is CQTVKKLFRQ…DNDVEKLLYF (127 aa). The segment at 1001–1321 is spacer 2; that stretch reads PFSRRVLKPN…HLMKDHSPAY (321 aa). 2 disordered regions span residues 1006–1140 and 1158–1179; these read VLKP…LSSS and PEVE…KDKS. The span at 1038–1047 shows a compositional bias: low complexity; sequence PTPLSTPTVP. The span at 1048-1107 shows a compositional bias: polar residues; it reads ESMSTSTPTINSLGSTIASQEDANGMGWQNNSTQAEEGSHFPTSSGSTSQVPVTSWSLSI. The segment covering 1130–1140 has biased composition (low complexity); sequence TTTSDSGLSSS. TSP type-1 domains lie at 1318–1371, 1373–1428, 1429–1477, and 1478–1538; these read SPAY…RPCA, WRVG…CNLE, PCGE…NRHL, and CCHW…QACR. In terms of domain architecture, PLAC spans 1541-1581; the sequence is ADLTCLKDRLSISFCQTLKSMRKCSVPSVRAQCCLSCPQAP.

Interacts with COMP. Zn(2+) is required as a cofactor. The precursor is cleaved by a furin endopeptidase. In terms of processing, subjected to an intracellular maturation process yielding a 120 kDa N-terminal fragment containing the metalloproteinase, disintegrin, one TSP type-1 and the Cys-rich domains and a 83 kDa C-terminal fragment containing the spacer 2 and four TSP type-1 domains. Post-translationally, glycosylated. Can be O-fucosylated by POFUT2 on a serine or a threonine residue found within the consensus sequence C1-X(2)-(S/T)-C2-G of the TSP type-1 repeat domains where C1 and C2 are the first and second cysteine residue of the repeat, respectively. Fucosylated repeats can then be further glycosylated by the addition of a beta-1,3-glucose residue by the glucosyltransferase, B3GALTL. Fucosylation mediates the efficient secretion of ADAMTS family members. Can also be C-glycosylated with one or two mannose molecules on tryptophan residues within the consensus sequence W-X-X-W of the TPRs, and N-glycosylated. These other glycosylations can also facilitate secretion.

The protein resides in the secreted. It is found in the extracellular space. Its subcellular location is the extracellular matrix. With respect to regulation, inhibited by alpha-2 macroglobulin. Functionally, metalloprotease that plays a role in the degradation of COMP. Also cleaves alpha-2 macroglobulin and aggregan. Has anti-tumorigenic properties. The chain is A disintegrin and metalloproteinase with thrombospondin motifs 12 (Adamts12) from Mus musculus (Mouse).